The chain runs to 644 residues: Threonine--tRNA ligase (644 aa).

Residues 1 to 61 (MKVSIEGSVV…TACETLEPVY (61 aa)) enclose the TGS domain. Positions 241–532 (DHRKLGTQLD…LTEHFAGAFP (292 aa)) are catalytic. Zn(2+) contacts are provided by Cys333, His384, and His509.

Belongs to the class-II aminoacyl-tRNA synthetase family. Homodimer. Zn(2+) is required as a cofactor.

It is found in the cytoplasm. It catalyses the reaction tRNA(Thr) + L-threonine + ATP = L-threonyl-tRNA(Thr) + AMP + diphosphate + H(+). Functionally, catalyzes the attachment of threonine to tRNA(Thr) in a two-step reaction: L-threonine is first activated by ATP to form Thr-AMP and then transferred to the acceptor end of tRNA(Thr). Also edits incorrectly charged L-seryl-tRNA(Thr). The protein is Threonine--tRNA ligase of Oleidesulfovibrio alaskensis (strain ATCC BAA-1058 / DSM 17464 / G20) (Desulfovibrio alaskensis).